Reading from the N-terminus, the 175-residue chain is Chromobox protein homolog hpl-2 (175 aa).

Positions 19–78 (FMVEKVLDKRTGKAGRDEFLIQWQGFPESDSSWEPRENLQCVEMLDEFEREFSKREKPIR) constitute a Chromo domain. The tract at residues 71-109 (SKREKPIRKRHSQKPEPSEDQADPEEDKDEKKETNQNDK) is disordered. The span at 88–98 (SEDQADPEEDK) shows a compositional bias: acidic residues. A compositionally biased stretch (basic and acidic residues) spans 99–109 (DEKKETNQNDK). In terms of domain architecture, Chromo 2; shadow subtype spans 115-172 (KQLKCIVGLTKGPGELHFLCKFSDDTARLLPAKEVNSRYPSQVIRYYESKLTIQDPKA).

As to quaternary structure, interacts with histone H3 when di-, or tri-methylated at 'Lys-27' (H3K27me2/me3), or tri-methylated at 'Lys-9' (H3K9me3). Interacts with Tar DNA-binding protein homolog tdp-1; interaction may maintain localization of hpl-2 to gene bodies. Interacts with histone H1 his-24, probably via interaction with hpl-1. Interacts with chromobox protein homolog hpl-1. In terms of assembly, may form homodimers. Interacts (via chromo (shadow subtype) domain) with zinc finger protein lin-13 (via PLVPV motif); the interaction is direct and influences localization of hpl-2 to nuclear foci.

It is found in the nucleus. It localises to the chromosome. Seems to be involved in transcriptional silencing in heterochromatin-like complexes. Probably does not act as global transcriptional repressor, instead targeting a subset of genes. Involved in RNA processing mediated by Tar DNA-binding protein homolog tdp-1. Plays a role in linking epigenetic regulation with the innate immune response. Involved in the endoplasmic reticulum (ER) stress response via modulation of the unfolded protein response (UPR), acting mainly through the IRE1-XBP1 pathway and perhaps, to a lesser extent, through the autophagy pathway. May act in a common pathway with retinoblastoma-like protein homolog lin-35 and zinc finger protein lin-13 to influence the ER stress response in the intestine. Plays a role in the formation of the vulva and in fertility, acting together with a CoREST-like complex, and chromobox protein homolog hpl-1. Acting in concert with hpl-1 and histone H1 protein his-24, involved in reproduction, somatic gonad development, male tail development and vulval cell fate specification; perhaps as a result of modulating expression of Hox genes mab-5 and egl-5. In vulval cell fate specification may act by repressing transcription, of EGF family gene lin-3 in hypodermal hyp7, and of homeobox lin-39 in vulval precursor cells (VPC). Role in growth and somatic gonad development is antagonized by histone-lysine N-methyltransferase set-2/SET1. Required for larval development, acting redundantly with hpl-1. Plays a role in regulation of the developmentally arrested larval state known as dauer, longevity, and lipid metabolism. The sequence is that of Chromobox protein homolog hpl-2 from Caenorhabditis elegans.